The primary structure comprises 583 residues: Vivapain-1 (583 aa).

Residues 1–34 are Cytoplasmic-facing; it reads MAQDIKIMNLTKSSLEALNRNQMLSKKSSRKILK. A propeptide spans 1 to 338 (activation peptide); sequence MAQDIKIMNL…SSSGANLLAD (338 aa). The chain crosses the membrane as a helical; Signal-anchor for type II membrane protein span at residues 35–55; the sequence is ICMYAILTFAMCGVVLICLTA. Residues 56 to 583 are Lumenal-facing; it reads MSNSDGSLTQ…IGVEVFYPIL (528 aa). Residues 62-82 are compositionally biased toward polar residues; it reads SLTQSGSHNQSGSLKGLSSTP. 2 disordered regions span residues 62 to 83 and 104 to 125; these read SLTQ…STPG and PHGN…ALPN. The N-linked (GlcNAc...) asparagine glycan is linked to Asn-70. Basic and acidic residues predominate over residues 106 to 119; it reads GNRDPTGDDVEKPA. N-linked (GlcNAc...) asparagine glycosylation is found at Asn-195 and Asn-272. 3 cysteine pairs are disulfide-bonded: Cys-360–Cys-402, Cys-395–Cys-435, and Cys-420–Cys-440. Cys-363 is a catalytic residue. Asn-381 carries an N-linked (GlcNAc...) asparagine glycan. N-linked (GlcNAc...) asparagine glycosylation is found at Asn-486 and Asn-494. An intrachain disulfide couples Cys-489 to Cys-572. Residues His-495 and Asn-547 contribute to the active site.

This sequence belongs to the peptidase C1 family.

It is found in the membrane. Functionally, cysteine protease. The polypeptide is Vivapain-1 (Plasmodium vivax (strain Salvador I)).